The sequence spans 861 residues: Integrator complex subunit 6-like (861 aa).

The VWFA domain maps to 3–227 (ILLFLIDTSA…QCLESLVQKV (225 aa)). The segment at 605-626 (PQNKVKRPGEPNSPMSSKRRRS) is disordered. Position 617 is a phosphoserine (S617).

The chain is Integrator complex subunit 6-like (INTS6L) from Homo sapiens (Human).